Reading from the N-terminus, the 310-residue chain is ADP-L-glycero-D-manno-heptose-6-epimerase (310 aa).

Residues 10–11, 31–32, K38, K53, 75–79, and N92 each bind NADP(+); these read FI, DN, and EGACS. The Proton acceptor role is filled by Y140. K144 contacts NADP(+). N169 contacts substrate. Residues V170 and K178 each contribute to the NADP(+) site. Residue K178 is the Proton acceptor of the active site. Residues G180, H187, 201–204, R209, and Y272 contribute to the substrate site; that span reads FAGS.

The protein belongs to the NAD(P)-dependent epimerase/dehydratase family. HldD subfamily. As to quaternary structure, homopentamer. NADP(+) is required as a cofactor.

The enzyme catalyses ADP-D-glycero-beta-D-manno-heptose = ADP-L-glycero-beta-D-manno-heptose. The protein operates within nucleotide-sugar biosynthesis; ADP-L-glycero-beta-D-manno-heptose biosynthesis; ADP-L-glycero-beta-D-manno-heptose from D-glycero-beta-D-manno-heptose 7-phosphate: step 4/4. Functionally, catalyzes the interconversion between ADP-D-glycero-beta-D-manno-heptose and ADP-L-glycero-beta-D-manno-heptose via an epimerization at carbon 6 of the heptose. In Sodalis glossinidius (strain morsitans), this protein is ADP-L-glycero-D-manno-heptose-6-epimerase.